Consider the following 313-residue polypeptide: Ribonuclease HIII (313 aa).

Residues 98–313 (YNCIGSDEAG…REKALKLIKK (216 aa)) enclose the RNase H type-2 domain. 3 residues coordinate a divalent metal cation: Asp-104, Glu-105, and Asp-208.

It belongs to the RNase HII family. RnhC subfamily. The cofactor is Mn(2+). It depends on Mg(2+) as a cofactor.

Its subcellular location is the cytoplasm. It carries out the reaction Endonucleolytic cleavage to 5'-phosphomonoester.. Its function is as follows. Endonuclease that specifically degrades the RNA of RNA-DNA hybrids. The sequence is that of Ribonuclease HIII from Macrococcus caseolyticus (strain JCSC5402) (Macrococcoides caseolyticum).